A 512-amino-acid chain; its full sequence is Lysine--tRNA ligase (512 aa).

2 residues coordinate Mg(2+): Glu421 and Glu428.

Belongs to the class-II aminoacyl-tRNA synthetase family. As to quaternary structure, homodimer. Requires Mg(2+) as cofactor.

It localises to the cytoplasm. It carries out the reaction tRNA(Lys) + L-lysine + ATP = L-lysyl-tRNA(Lys) + AMP + diphosphate. The chain is Lysine--tRNA ligase from Aeromonas salmonicida (strain A449).